We begin with the raw amino-acid sequence, 707 residues long: Alpha-hemolysin translocation ATP-binding protein HlyB (707 aa).

A Peptidase C39 domain is found at 2 to 125 (DFHHKNNYGL…DLYQGNIILI (124 aa)). The active site involves H83. The 283-residue stretch at 154 to 436 (FIETLIVSVF…LAQLWQDFQQ (283 aa)) folds into the ABC transmembrane type-1 domain. The next 5 helical transmembrane spans lie at 158-178 (LIVS…FQVV), 191-211 (LNII…LSGL), 269-289 (ALTS…MWYY), 295-315 (LVIL…SPIL), and 387-407 (AVMI…DLSI). The ABC transporter domain occupies 468-703 (ISFRNIRFRY…PESLYHYLHQ (236 aa)). 502–509 (GRSGSGKS) lines the ATP pocket.

This sequence belongs to the ABC transporter superfamily. Protein-1 exporter (TC 3.A.1.109) family.

Its subcellular location is the cell membrane. Involved in the export of hemolysin A. In Proteus vulgaris, this protein is Alpha-hemolysin translocation ATP-binding protein HlyB (hlyB).